A 275-amino-acid chain; its full sequence is 3-oxo-isoapionate decarboxylase (275 aa).

It carries out the reaction 3-oxoisoapionate + H(+) = L-erythrulose + CO2. It participates in carbohydrate metabolism. Functionally, involved in catabolism of D-apiose. Catalyzes decarboxylation of 3-oxo-isoapionate to L-erythrulose. This chain is 3-oxo-isoapionate decarboxylase, found in Pectobacterium atrosepticum (strain SCRI 1043 / ATCC BAA-672) (Erwinia carotovora subsp. atroseptica).